We begin with the raw amino-acid sequence, 343 residues long: Lactamase-like protein nscB (343 aa).

The Zn(2+) site is built by His118, His120, Asp122, and His123. Residue Asp122 is the Proton donor/acceptor of the active site.

The protein belongs to the metallo-beta-lactamase superfamily. Requires Zn(2+) as cofactor.

It functions in the pathway secondary metabolite biosynthesis. Lactamase-like protein; part of the gene cluster that mediates the biosynthesis of neosartoricin B, a prenylated anthracenone that probably exhibits T-cell antiproliferative activity, suggestive of a physiological role as an immunosuppressive agent. The non-reducing polyketide synthase nscA probably synthesizes and cyclizes the decaketide backbone. The hydrolase nscB then mediates the product release through hydrolysis followed by spontaneous decarboxylation. The prenyltransferase nscD catalyzes the addition of the dimethylallyl group to the aromatic C5. The FAD-dependent monooxygenase nscC is then responsible for the stereospecific hydroxylation at C2. Neosartoricin B can be converted into two additional compounds neosartoricins C and D. Neosartoricin C is a spirocyclic compound that is cyclized through the attack of C3 hydroxyl on C14, followed by dehydration. On the other hand, neosartoricin D is a further cyclized compound in which attack of C2 on C14 in neosartoricin C results in the formation of the acetal-containing dioxabicyclo-octanone ring. Both of these compounds are novel and possibly represent related metabolites of the gene cluster. In Arthroderma otae (strain ATCC MYA-4605 / CBS 113480) (Microsporum canis), this protein is Lactamase-like protein nscB.